The primary structure comprises 352 residues: V-type ATP synthase subunit C (352 aa).

The protein belongs to the V-ATPase V0D/AC39 subunit family.

Produces ATP from ADP in the presence of a proton gradient across the membrane. The protein is V-type ATP synthase subunit C (atpC) of Deinococcus radiodurans (strain ATCC 13939 / DSM 20539 / JCM 16871 / CCUG 27074 / LMG 4051 / NBRC 15346 / NCIMB 9279 / VKM B-1422 / R1).